The chain runs to 143 residues: Transcriptional regulator MraZ (143 aa).

2 SpoVT-AbrB domains span residues 5–47 and 76–119; these read THTP…PMQE and ASSE…DLRT.

It belongs to the MraZ family. Forms oligomers.

It is found in the cytoplasm. The protein resides in the nucleoid. This Kineococcus radiotolerans (strain ATCC BAA-149 / DSM 14245 / SRS30216) protein is Transcriptional regulator MraZ.